The chain runs to 386 residues: MPDPYAWLQNSLLTIHRADWYRSVQTIQGRAGASVVLGGKEVINFASNDYLGLAGDERLIAAAVAATQEFGTGSTGSRLLSGHRELHGELEKAIASWKQTEDALVFSSGYLANIGAIAALVGKRDLILSDQYNHSSLKNGAILSGATVREYSHCEVGELKTQLLEQRQNYRRCLILTDSVFSMDGDLCPLPALLDLAEQFSCMLLVDEAHATGVMGKTGAGCVEHFGCTGRQLIQIGTLSKALGSLGGYVAGSHPLIDYLRNRAPSWIYTTGLSPADTAAALAAINIAQQEPQHRMQLWHNVNYLRELLQKIPNLKLLPSASPILCFQLSSPSEALQVGKQLKQAGIFAPAIRPPTVPTSRIRISLMATHKPAHIEKLVAVLADIS.

A substrate-binding site is contributed by arginine 22. Residue 109–110 participates in pyridoxal 5'-phosphate binding; it reads GY. Residue histidine 134 participates in substrate binding. Pyridoxal 5'-phosphate is bound by residues serine 182, 207 to 210, and 238 to 241; these read DEAH and TLSK. Position 241 is an N6-(pyridoxal phosphate)lysine (lysine 241). Threonine 356 is a binding site for substrate.

It belongs to the class-II pyridoxal-phosphate-dependent aminotransferase family. BioF subfamily. Homodimer. Requires pyridoxal 5'-phosphate as cofactor.

The catalysed reaction is 6-carboxyhexanoyl-[ACP] + L-alanine + H(+) = (8S)-8-amino-7-oxononanoate + holo-[ACP] + CO2. It participates in cofactor biosynthesis; biotin biosynthesis. Its function is as follows. Catalyzes the decarboxylative condensation of pimeloyl-[acyl-carrier protein] and L-alanine to produce 8-amino-7-oxononanoate (AON), [acyl-carrier protein], and carbon dioxide. This chain is Putative 8-amino-7-oxononanoate synthase (bioF), found in Trichormus variabilis (strain ATCC 29413 / PCC 7937) (Anabaena variabilis).